The following is a 122-amino-acid chain: Ribosomal protein eL22-like 1 (122 aa).

Phosphoserine is present on residues Ser112, Ser118, and Ser120.

It belongs to the eukaryotic ribosomal protein eL22 family.

The chain is Ribosomal protein eL22-like 1 (Rpl22l1) from Mus musculus (Mouse).